The chain runs to 300 residues: Protein CANDIDATE G-PROTEIN COUPLED RECEPTOR 2 (300 aa).

7 helical membrane-spanning segments follow: residues 37-57, 73-93, 110-130, 152-172, 183-203, 222-242, and 245-265; these read GFLHNTVLVLASILFVAYLAY, IMIAYYGFLWLVSLLNLAWCC, LTLFTTSGMLFLEVSLVAFLF, IGLDLLLKAIYLFGFGVPLFI, WGLWVIHKLLLAGIYGMIFFM, ITVMLALNGLSLFACALTANG, and FGLWLYGITSVCYHAFYLPLL.

It belongs to the UPF0359 family. In terms of assembly, interacts with GPA1. In terms of tissue distribution, expressed at low levels in seedlings.

The protein localises to the cell membrane. Plays a role in plants and microbes interactions. G-protein coupled melatonin receptor involved in root growth mediated by the bacterial quorum-sensing signals N-acyl-homoserine lactones (AHLs). Binds to melatonin. Phytomelatonin receptor required, in collaboration with GPA1, for melatonin-mediated stomatal closure involving H(2)O(2) and Ca(2+) signals. Essential for melatonin-mediated plant response to osmotic stress probably by activating reactive oxygen species (ROS) scavenging ability. In Arabidopsis thaliana (Mouse-ear cress), this protein is Protein CANDIDATE G-PROTEIN COUPLED RECEPTOR 2.